A 120-amino-acid polypeptide reads, in one-letter code: uncharacterized protein (120 aa).

Residues 40–62 form a helical membrane-spanning segment; that stretch reads SFLTDALLNLIYILFFSSSVFNW.

Its subcellular location is the membrane. This is an uncharacterized protein from Saccharomyces cerevisiae (strain ATCC 204508 / S288c) (Baker's yeast).